Reading from the N-terminus, the 138-residue chain is 16 kDa phloem protein 2 (138 aa).

Residues 1 to 108 form the C2 domain; that stretch reads MGMGMMEVHL…LAEGVRKGWS (108 aa). Ca(2+)-binding residues include aspartate 20, aspartate 27, aspartate 78, aspartate 80, and aspartate 86.

It depends on Ca(2+) as a cofactor. In terms of tissue distribution, sieve elements of leaves, stems, roots and flowers.

Binds to both sense and antisense RNA. Interacts with mesophyll plasmodesmata to mediate its own cell-to-cell transport and potentiate RNA trafficking. This chain is 16 kDa phloem protein 2 (PP16-2), found in Cucurbita maxima (Pumpkin).